The chain runs to 403 residues: Blue light- and temperature-regulated antirepressor BluF (403 aa).

Residues 2–93 (LTTLIYRSHI…ARRFGKAGME (92 aa)) form the BLUF domain. The interval 98–144 (RLHERDDVLQAVFDKGTSKFQLTYDDRALQFFRTFVLATEQSTYFEI) is joining helix. Positions 155 to 403 (DGSDKELDSC…IPSIAWPEKK (249 aa)) constitute an EAL domain.

Monomer, it undergoes transient dimerization following photoexcitation or upon temperature reduction, with a relaxation time of about 2 minutes. The dimer may be the inactive state. Interacts with the N- and C-terminal domains of BluR. Can also interact with the C-terminal domain of MlrA. Requires FAD as cofactor.

In terms of biological role, binds to and releases the BluR repressor from its bound DNA target in a blue light-dependent (470 nm) fashion. A shift to low temperature also triggers a BluF-mediated relief of repression by BluR, suggesting BluF may serve as a thermometer. Blue light may act to increase the affinity of BluF for BluR, allowing it to be released from its operator. The protein has a reversible photocycle, and undergoes structural changes, probably in the EAL domain, in response to light. This chain is Blue light- and temperature-regulated antirepressor BluF, found in Escherichia coli (strain K12).